We begin with the raw amino-acid sequence, 301 residues long: GTPase Era (301 aa).

One can recognise an Era-type G domain in the interval 7–175 (YCGFIAIVGR…AAIVRKHLPE (169 aa)). The G1 stretch occupies residues 15–22 (GRPNVGKS). 15–22 (GRPNVGKS) is a binding site for GTP. The segment at 41 to 45 (QTTRH) is G2. Positions 62 to 65 (DTPG) are G3. Residues 62 to 66 (DTPGL) and 124 to 127 (NKVD) contribute to the GTP site. Residues 124–127 (NKVD) are G4. Residues 154-156 (ISA) form a G5 region. A KH type-2 domain is found at 206–283 (LGAELPYSVT…HLELWVKVKS (78 aa)).

This sequence belongs to the TRAFAC class TrmE-Era-EngA-EngB-Septin-like GTPase superfamily. Era GTPase family. As to quaternary structure, monomer.

The protein resides in the cytoplasm. It is found in the cell inner membrane. Its function is as follows. An essential GTPase that binds both GDP and GTP, with rapid nucleotide exchange. Plays a role in 16S rRNA processing and 30S ribosomal subunit biogenesis and possibly also in cell cycle regulation and energy metabolism. The sequence is that of GTPase Era from Escherichia coli (strain K12 / DH10B).